The primary structure comprises 28 residues: Dermaseptin-DI2 (28 aa).

Expressed by the skin glands.

Its subcellular location is the secreted. Functionally, has antibacterial activity against the Gram-positive bacteria S.aureus and E.faecalis, and the Gram-negative bacteria P.aeruginosa and E.coli. Has antiprotozoal activity against T.cruzi. Has antifungal activity against the yeasts C.tropicalis (MIC=10.9 uM), C.guilliermondii (MIC=21.8 uM), C.albicans (MIC=21.8 uM) and C.albicans ATCC 1023 (MIC=10.9 uM). Decreases viability of murine peritoneal cells. Fuses to, and disrupts liposomes. The sequence is that of Dermaseptin-DI2 from Phyllomedusa distincta (Monkey frog).